The following is a 219-amino-acid chain: 2-hydroxy-3-keto-5-methylthiopentenyl-1-phosphate phosphatase (219 aa).

Belongs to the HAD-like hydrolase superfamily. MtnX family.

The catalysed reaction is 2-hydroxy-5-methylsulfanyl-3-oxopent-1-enyl phosphate + H2O = 1,2-dihydroxy-5-(methylsulfanyl)pent-1-en-3-one + phosphate. It participates in amino-acid biosynthesis; L-methionine biosynthesis via salvage pathway; L-methionine from S-methyl-5-thio-alpha-D-ribose 1-phosphate: step 4/6. Functionally, dephosphorylates 2-hydroxy-3-keto-5-methylthiopentenyl-1-phosphate (HK-MTPenyl-1-P) yielding 1,2-dihydroxy-3-keto-5-methylthiopentene (DHK-MTPene). This Bacillus thuringiensis (strain Al Hakam) protein is 2-hydroxy-3-keto-5-methylthiopentenyl-1-phosphate phosphatase.